Reading from the N-terminus, the 311-residue chain is L-lactate dehydrogenase (311 aa).

Residues Val12, Asp33, Lys38, Tyr63, and Gly77 to Ala78 each bind NAD(+). Substrate is bound by residues Gln80, Arg86, and Asn118–Asp121. Residues Val116 to Asn118 and Ser141 contribute to the NAD(+) site. Asp146 to Arg149 contacts substrate. Beta-D-fructose 1,6-bisphosphate-binding residues include Arg151 and His166. His173 (proton acceptor) is an active-site residue. Tyr219 is modified (phosphotyrosine). Thr228 contributes to the substrate binding site.

It belongs to the LDH/MDH superfamily. LDH family. In terms of assembly, homotetramer.

The protein resides in the cytoplasm. It catalyses the reaction (S)-lactate + NAD(+) = pyruvate + NADH + H(+). It participates in fermentation; pyruvate fermentation to lactate; (S)-lactate from pyruvate: step 1/1. Allosterically activated by fructose 1,6-bisphosphate (FBP). Its function is as follows. Catalyzes the conversion of lactate to pyruvate. In Thermoanaerobacter pseudethanolicus (strain ATCC 33223 / 39E) (Clostridium thermohydrosulfuricum), this protein is L-lactate dehydrogenase.